Consider the following 467-residue polypeptide: Ribulose bisphosphate carboxylase large chain (467 aa).

The propeptide occupies 1–2; that stretch reads MS. Residue Pro-3 is modified to N-acetylproline. At Lys-14 the chain carries N6,N6,N6-trimethyllysine. 2 residues coordinate substrate: Asn-123 and Thr-173. Residue Lys-175 is the Proton acceptor of the active site. Residue Lys-177 coordinates substrate. Lys-201, Asp-203, and Glu-204 together coordinate Mg(2+). The residue at position 201 (Lys-201) is an N6-carboxylysine. The Proton acceptor role is filled by His-294. Substrate-binding residues include Arg-295, His-327, and Ser-379.

The protein belongs to the RuBisCO large chain family. Type I subfamily. In terms of assembly, heterohexadecamer of 8 large chains and 8 small chains; disulfide-linked. The disulfide link is formed within the large subunit homodimers. It depends on Mg(2+) as a cofactor. Post-translationally, the disulfide bond which can form in the large chain dimeric partners within the hexadecamer appears to be associated with oxidative stress and protein turnover.

It is found in the plastid. The protein resides in the chloroplast. It catalyses the reaction 2 (2R)-3-phosphoglycerate + 2 H(+) = D-ribulose 1,5-bisphosphate + CO2 + H2O. The catalysed reaction is D-ribulose 1,5-bisphosphate + O2 = 2-phosphoglycolate + (2R)-3-phosphoglycerate + 2 H(+). RuBisCO catalyzes two reactions: the carboxylation of D-ribulose 1,5-bisphosphate, the primary event in carbon dioxide fixation, as well as the oxidative fragmentation of the pentose substrate in the photorespiration process. Both reactions occur simultaneously and in competition at the same active site. In Serenoa repens (Saw palmetto), this protein is Ribulose bisphosphate carboxylase large chain.